We begin with the raw amino-acid sequence, 157 residues long: uncharacterized protein (157 aa).

In terms of domain architecture, N-acetyltransferase spans 9-146 (LLINYKTLDE…GDFYVWHPET (138 aa)).

This is an uncharacterized protein from Bacillus cereus (strain AH187).